The sequence spans 101 residues: MASTSKPAASTTAIKKYYFYVLLCADQTLYGGFTDNLQRRLATHNAGKGAKYTRVRSRRPLQLIYHETFTDKSSALKAEYAFKHQSRAAKLKYLSAHDVKI.

Positions 15–92 constitute a GIY-YIG domain; the sequence is KKYYFYVLLC…KHQSRAAKLK (78 aa).

The protein belongs to the UPF0213 family.

The polypeptide is UPF0213 protein lp_2058 (Lactiplantibacillus plantarum (strain ATCC BAA-793 / NCIMB 8826 / WCFS1) (Lactobacillus plantarum)).